The sequence spans 473 residues: H(+)/Cl(-) exchange transporter ClcA (473 aa).

Topologically, residues 1–32 (MKTDTSTFLAQQIVRLRRRDQIRRLMQRDKTP) are cytoplasmic. Residues 33-69 (LAILFMAAVVGTLTGLVGVAFEKAVSWVQNMRIGALV) traverse the membrane as a helical segment. Topologically, residues 70-76 (QVADHAF) are periplasmic. Residues 77–100 (LLWPLAFILSALLAMVGYFLVRKF) traverse the membrane as a helical segment. The short motif at 106–110 (GSGIP) is the Selectivity filter part_1 element. Residue Ser-107 coordinates chloride. Residues 109–116 (IPEIEGAL) constitute an intramembrane region (helical). Residues 117 to 123 (EELRPVR) are Cytoplasmic-facing. 2 consecutive transmembrane segments (helical) span residues 124-141 (WWRV…TLGA) and 148-166 (EGPT…LDVF). The Selectivity filter part_2 signature appears at 146-150 (GREGP). The Cytoplasmic segment spans residues 167–176 (RMRSAEARHT). 2 intramembrane regions (helical) span residues 177–189 (LLAT…LSAA) and 193–201 (PLAGILFII). Residues 202 to 214 (EEMRPQFRYNLIS) lie on the Cytoplasmic side of the membrane. Residues 215-232 (IKAVFTGVIMSSIVFRIF) traverse the membrane as a helical segment. The Periplasmic portion of the chain corresponds to 233-252 (NGEAPIIEVGKLSDAPVNTL). Residues 253 to 281 (WLYLILGIIFGCVGPVFNSLVLRTQDMFQ) traverse the membrane as a helical segment. Topologically, residues 282 to 287 (RFHGGE) are cytoplasmic. Residues 288-309 (IKKWVLMGGAIGGLCGILGLIE) form a helical membrane-spanning segment. At 310-329 (PEAAGGGFNLIPIAAAGNFS) the chain is on the periplasmic side. The next 2 helical transmembrane spans lie at 330–349 (VGLL…LCFS) and 355–376 (GIFA…MAAA). The Selectivity filter part_3 motif lies at 355–359 (GIFAP). Chloride is bound by residues Ile-356 and Phe-357. Residues 377–386 (VLFPQYHLEA) lie on the Periplasmic side of the membrane. An intramembrane region (helical) is located at residues 387-401 (GTFAIAGMGALMAAS). The note=Loop between two helices intramembrane region spans 402–404 (VRA). The segment at residues 405–416 (PLTGIVLVLEMT) is an intramembrane region (helical). An intramembrane region (note=Loop between two helices) is located at residues 417–421 (DNYQL). A helical transmembrane segment spans residues 422–438 (ILPMIITCLGATLLAQF). Topologically, residues 439–473 (LGGKPLYSTILARTLAKQDAEQAAKSQNAPAGENT) are cytoplasmic. Position 445 (Tyr-445) interacts with chloride.

This sequence belongs to the chloride channel (TC 2.A.49) family. ClcA subfamily. In terms of assembly, homodimer.

Its subcellular location is the cell inner membrane. It catalyses the reaction 2 chloride(in) + H(+)(out) = 2 chloride(out) + H(+)(in). Its function is as follows. Proton-coupled chloride transporter. Functions as antiport system and exchanges two chloride ions for 1 proton. Probably acts as an electrical shunt for an outwardly-directed proton pump that is linked to amino acid decarboxylation, as part of the extreme acid resistance (XAR) response. This is H(+)/Cl(-) exchange transporter ClcA from Salmonella gallinarum (strain 287/91 / NCTC 13346).